The primary structure comprises 306 residues: Acetyl-coenzyme A carboxylase carboxyl transferase subunit beta (306 aa).

The 270-residue stretch at 27–296 (LWHKCPSCDA…PRFVAPVIEP (270 aa)) folds into the CoA carboxyltransferase N-terminal domain. 4 residues coordinate Zn(2+): Cys31, Cys34, Cys50, and Cys53. The C4-type zinc-finger motif lies at 31-53 (CPSCDAVLYRPELEKTLDVCPKC).

It belongs to the AccD/PCCB family. As to quaternary structure, acetyl-CoA carboxylase is a heterohexamer composed of biotin carboxyl carrier protein (AccB), biotin carboxylase (AccC) and two subunits each of ACCase subunit alpha (AccA) and ACCase subunit beta (AccD). Zn(2+) is required as a cofactor.

It is found in the cytoplasm. It carries out the reaction N(6)-carboxybiotinyl-L-lysyl-[protein] + acetyl-CoA = N(6)-biotinyl-L-lysyl-[protein] + malonyl-CoA. The protein operates within lipid metabolism; malonyl-CoA biosynthesis; malonyl-CoA from acetyl-CoA: step 1/1. Component of the acetyl coenzyme A carboxylase (ACC) complex. Biotin carboxylase (BC) catalyzes the carboxylation of biotin on its carrier protein (BCCP) and then the CO(2) group is transferred by the transcarboxylase to acetyl-CoA to form malonyl-CoA. This chain is Acetyl-coenzyme A carboxylase carboxyl transferase subunit beta, found in Pseudomonas syringae pv. tomato (strain ATCC BAA-871 / DC3000).